The primary structure comprises 159 residues: 2-C-methyl-D-erythritol 2,4-cyclodiphosphate synthase (159 aa).

A divalent metal cation-binding residues include Asp8 and His10. 4-CDP-2-C-methyl-D-erythritol 2-phosphate is bound by residues Asp8 to His10 and His34 to Ser35. Position 42 (His42) interacts with a divalent metal cation. 4-CDP-2-C-methyl-D-erythritol 2-phosphate is bound by residues Asp56–Gly58, Phe61–Asp65, Thr132–Glu135, Phe139, and Arg142.

Belongs to the IspF family. As to quaternary structure, homotrimer. The cofactor is a divalent metal cation.

It catalyses the reaction 4-CDP-2-C-methyl-D-erythritol 2-phosphate = 2-C-methyl-D-erythritol 2,4-cyclic diphosphate + CMP. It functions in the pathway isoprenoid biosynthesis; isopentenyl diphosphate biosynthesis via DXP pathway; isopentenyl diphosphate from 1-deoxy-D-xylulose 5-phosphate: step 4/6. Functionally, involved in the biosynthesis of isopentenyl diphosphate (IPP) and dimethylallyl diphosphate (DMAPP), two major building blocks of isoprenoid compounds. Catalyzes the conversion of 4-diphosphocytidyl-2-C-methyl-D-erythritol 2-phosphate (CDP-ME2P) to 2-C-methyl-D-erythritol 2,4-cyclodiphosphate (ME-CPP) with a corresponding release of cytidine 5-monophosphate (CMP). This Finegoldia magna (strain ATCC 29328 / DSM 20472 / WAL 2508) (Peptostreptococcus magnus) protein is 2-C-methyl-D-erythritol 2,4-cyclodiphosphate synthase.